The primary structure comprises 159 residues: NADH-quinone oxidoreductase subunit B (159 aa).

4 residues coordinate [4Fe-4S] cluster: Cys36, Cys37, Cys102, and Cys132.

The protein belongs to the complex I 20 kDa subunit family. As to quaternary structure, NDH-1 is composed of 14 different subunits. Subunits NuoB, C, D, E, F, and G constitute the peripheral sector of the complex. The cofactor is [4Fe-4S] cluster.

It is found in the cell inner membrane. The enzyme catalyses a quinone + NADH + 5 H(+)(in) = a quinol + NAD(+) + 4 H(+)(out). NDH-1 shuttles electrons from NADH, via FMN and iron-sulfur (Fe-S) centers, to quinones in the respiratory chain. Couples the redox reaction to proton translocation (for every two electrons transferred, four hydrogen ions are translocated across the cytoplasmic membrane), and thus conserves the redox energy in a proton gradient. The polypeptide is NADH-quinone oxidoreductase subunit B (Paracidovorax citrulli (strain AAC00-1) (Acidovorax citrulli)).